The primary structure comprises 223 residues: Ubiquitin-conjugating enzyme E2 S (223 aa).

The residue at position 1 (Met1) is an N-acetylmethionine. Residues 11-157 (HIIRLVYKEV…ARLLTEIHGG (147 aa)) form the UBC core domain. Cys95 acts as the Glycyl thioester intermediate in catalysis. Residues 155–223 (HGGAGGPSGG…TDKKRALRRL (69 aa)) are disordered. Over residues 169-195 (GRATASGAAASTADPTAPGGPAGAEGP) the composition is skewed to low complexity. Ser174 is subject to Phosphoserine. Residues 209 to 223 (AAKKKTDKKRALRRL) show a composition bias toward basic residues.

This sequence belongs to the ubiquitin-conjugating enzyme family. Component of the APC/C complex, composed of at least 14 distinct subunits that assemble into a complex of at least 19 chains with a combined molecular mass of around 1.2 MDa. Within this complex, directly interacts with ANAPC2 and ANAPC4. Interacts with CDC20, FZR1/CDH1 and VHL. In terms of processing, autoubiquitinated by the APC/C complex during G1, leading to its degradation by the proteasome.

The enzyme catalyses S-ubiquitinyl-[E1 ubiquitin-activating enzyme]-L-cysteine + [E2 ubiquitin-conjugating enzyme]-L-cysteine = [E1 ubiquitin-activating enzyme]-L-cysteine + S-ubiquitinyl-[E2 ubiquitin-conjugating enzyme]-L-cysteine.. It participates in protein modification; protein ubiquitination. Its function is as follows. Accepts ubiquitin from the E1 complex and catalyzes its covalent attachment to other proteins. Catalyzes 'Lys-11'-linked polyubiquitination. Acts as an essential factor of the anaphase promoting complex/cyclosome (APC/C), a cell cycle-regulated ubiquitin ligase that controls progression through mitosis. Acts by specifically elongating 'Lys-11'-linked polyubiquitin chains initiated by the E2 enzyme UBE2C/UBCH10 on APC/C substrates, enhancing the degradation of APC/C substrates by the proteasome and promoting mitotic exit. Also acts by elongating ubiquitin chains initiated by the E2 enzyme UBE2D1/UBCH5 in vitro; it is however unclear whether UBE2D1/UBCH5 acts as an E2 enzyme for the APC/C in vivo. Also involved in ubiquitination and subsequent degradation of VHL, resulting in an accumulation of HIF1A. In vitro able to promote polyubiquitination using all 7 ubiquitin Lys residues, except 'Lys-48'-linked polyubiquitination. This Bos taurus (Bovine) protein is Ubiquitin-conjugating enzyme E2 S (UBE2S).